A 148-amino-acid polypeptide reads, in one-letter code: Large ribosomal subunit protein bL9 (148 aa).

This sequence belongs to the bacterial ribosomal protein bL9 family.

In terms of biological role, binds to the 23S rRNA. In Pseudomonas putida (strain W619), this protein is Large ribosomal subunit protein bL9.